The primary structure comprises 461 residues: MLKIFNTLTRQKEEFKPIHAGEVGMYVCGITVYDLCHIGHGRTFVAFDVVARYLRFLGYKLKYVRNITDIDDKIIKRANENGESFVAMVDRMIAEMHKDFDALNILRPDMEPRATHHIAEIIELTEQLIAKGHAYVADNGDVMFDVPTDPTYGVLSRQDLDQLQAGARVDVVDDKRNPMDFVLWKMSKEGEPSWPSPWGAGRPGWHIECSAMNCKQLGNHFDIHGGGSDLMFPHHENEIAQSTCAHDGQYVNYWMHSGMVMVDREKMSKSLGNFFTVRDVLKYYDAETVRYFLMSGHYRSQLNYSEENLKQARAALERLYTALRGTDKTVAPAGGEAFEARFIEAMDDDFNTPEAYSVLFDMAREVNRLKAEDMAAANAMASHLRKLSAVLGLLEQEPEAFLQSGAQADDSEVAEIEALIQQRLDARKAKDWAAADAARDRLNEMGIVLEDGPQGTTWRRK.

Residue cysteine 28 coordinates Zn(2+). Positions 30–40 match the 'HIGH' region motif; sequence ITVYDLCHIGH. Cysteine 209, histidine 234, and glutamate 238 together coordinate Zn(2+). The 'KMSKS' region signature appears at 266–270; it reads KMSKS. Lysine 269 contributes to the ATP binding site.

This sequence belongs to the class-I aminoacyl-tRNA synthetase family. In terms of assembly, monomer. Zn(2+) serves as cofactor.

It is found in the cytoplasm. It catalyses the reaction tRNA(Cys) + L-cysteine + ATP = L-cysteinyl-tRNA(Cys) + AMP + diphosphate. In Escherichia coli (strain K12 / MC4100 / BW2952), this protein is Cysteine--tRNA ligase.